Reading from the N-terminus, the 160-residue chain is Transcription elongation factor GreA (160 aa).

Positions 11–38 form a coiled coil; it reads YDRLMKELERLKSERPAIIQAIKEAREE.

It belongs to the GreA/GreB family.

Functionally, necessary for efficient RNA polymerase transcription elongation past template-encoded arresting sites. The arresting sites in DNA have the property of trapping a certain fraction of elongating RNA polymerases that pass through, resulting in locked ternary complexes. Cleavage of the nascent transcript by cleavage factors such as GreA or GreB allows the resumption of elongation from the new 3'terminus. GreA releases sequences of 2 to 3 nucleotides. The chain is Transcription elongation factor GreA from Nitratidesulfovibrio vulgaris (strain DSM 19637 / Miyazaki F) (Desulfovibrio vulgaris).